Reading from the N-terminus, the 286-residue chain is 2-hydroxy-6-oxo-6-phenylhexa-2,4-dienoate hydrolase (286 aa).

Residues 42 to 43, Asn-51, Asn-111, Ser-180, and Arg-190 contribute to the substrate site; that span reads GG. His-265 acts as the Proton acceptor in catalysis. Trp-266 contributes to the substrate binding site.

This sequence belongs to the AB hydrolase superfamily. BphD family. Homodimer.

The catalysed reaction is 2,6-dioxo-6-phenylhexa-3-enoate + H2O = 2-oxopent-4-enoate + benzoate + H(+). The protein operates within xenobiotic degradation; biphenyl degradation; 2-hydroxy-2,4-pentadienoate and benzoate from biphenyl: step 4/4. In terms of biological role, catalyzes an unusual C-C bond hydrolysis of 2-hydroxy-6-oxo-6-phenylhexa-2,4-dienoic acid (HOPDA) to produce benzoic acid and 2-hydroxy-2,4-pentadienoic acid (HPD). In Pseudomonas putida (Arthrobacter siderocapsulatus), this protein is 2-hydroxy-6-oxo-6-phenylhexa-2,4-dienoate hydrolase (bphD).